The chain runs to 349 residues: Glycerol-3-phosphate dehydrogenase [NAD(+)], cytoplasmic (349 aa).

NAD(+) is bound at residue 10–15 (GSGNWG). Lys120 contributes to the substrate binding site. Ala153 lines the NAD(+) pocket. Position 154 is a phosphoserine (Ser154). The Proton acceptor role is filled by Lys204. Arg269 is a binding site for NAD(+). Substrate is bound at residue 269–270 (RN). Lys289 is modified (N6-succinyllysine). Residues Lys296 and Gln298 each contribute to the NAD(+) site. Tyr326 carries the post-translational modification Phosphotyrosine.

Belongs to the NAD-dependent glycerol-3-phosphate dehydrogenase family. In terms of assembly, homodimer.

Its subcellular location is the cytoplasm. The catalysed reaction is sn-glycerol 3-phosphate + NAD(+) = dihydroxyacetone phosphate + NADH + H(+). Functionally, has glycerol-3-phosphate dehydrogenase activity. In Mus musculus (Mouse), this protein is Glycerol-3-phosphate dehydrogenase [NAD(+)], cytoplasmic.